The primary structure comprises 313 residues: Desiccation-related protein PCC13-62 (313 aa).

The N-terminal stretch at Met1–Ala26 is a signal peptide.

The polypeptide is Desiccation-related protein PCC13-62 (Craterostigma plantagineum (Blue gem)).